The chain runs to 249 residues: Bax inhibitor 1 (249 aa).

The next 6 membrane-spanning stretches (helical) occupy residues 39-59 (LVYL…YLHV), 65-85 (GMLT…VPVF), 93-113 (ILLA…KLAV), 119-139 (ILVT…CAAI), 151-171 (GLLS…SIFG), and 213-233 (HALT…VIML).

It belongs to the BI1 family. In terms of tissue distribution, ubiquitous.

Its subcellular location is the membrane. Suppressor of apoptosis. The chain is Bax inhibitor 1 (BI1) from Oryza sativa subsp. japonica (Rice).